The sequence spans 432 residues: MALTKDNEDLVRVGRGTPMGGLMREYWIPALKSTELEAGGSPVRLLLLGEKLVAFREPSGAVGVMDSRCPHRGVSLFMGRVEEGGLRCVYHGWKFSAEGKCVDMPSVRPEDEFKNSVRVARYPVKEMAGVVWVYMGTRKVLPELPRLEVLNLPENEVDVICLQRKSNWLQNLEGEIDTSHFNFLHVGGLHADEVPDDHPLKYTAQVAPQYLVKETALGTCYAAQVPAEEDHTYTRFAHFLFPFWALIPQADIAQNILARAWVPMDDEHTMMFFFRWTGSKAKRLDTPLKSGSPMPGVTLTDMKYKENTTDWYGRWQPLGDESNDWLIDRDLQKVGRVFSGIYGIHAQDQAMTDSMGPIIDHGLEQLAPTDLMIVRTRRRILKALRAHEANGTLPPGVDEADQYFTPRSGYYLTPKSVDWETAYEQRIEGLVR.

One can recognise a Rieske domain in the interval 27–133 (WIPALKSTEL…VKEMAGVVWV (107 aa)). 4 residues coordinate [2Fe-2S] cluster: C69, H71, C88, and H91. Positions 180 and 185 each coordinate Fe cation.

It belongs to the bacterial ring-hydroxylating dioxygenase alpha subunit family. This dioxygenase system consists of two proteins: an oxygenase and an oxygenase reductase. [2Fe-2S] cluster is required as a cofactor. It depends on Fe cation as a cofactor.

The sequence is that of 3-chlorobenzoate-3,4-dioxygenase oxygenase subunit (cbaA) from Comamonas testosteroni (Pseudomonas testosteroni).